Here is a 374-residue protein sequence, read N- to C-terminus: Multicilin (374 aa).

Disordered stretches follow at residues C18–A72 and C84–S105. Residues E168–L216 adopt a coiled-coil conformation. The interval L284–G306 is disordered.

The protein belongs to the geminin family. As to quaternary structure, heterodimer (via coiled-coil domain) with GMNN (via coiled-coil domain); targets GMNN to the nucleus. Can form homodimers (in vitro, via coiled-coil domain), but these are much less stable than the heterodimer formed with GMNN.

The protein localises to the nucleus. In terms of biological role, transcription regulator specifically required for multiciliate cell differentiation. Acts in a multiprotein complex containing E2F4 and E2F5 that binds and activates genes required for centriole biogenesis. Required for the deuterosome-mediated acentriolar pathway. Plays a role in mitotic cell cycle progression by promoting cell cycle exit. Modulates GMNN activity by reducing its affinity for CDT1. This Bos taurus (Bovine) protein is Multicilin (MCIDAS).